Consider the following 196-residue polypeptide: Putative acetyltransferase YJL218W (196 aa).

Asparagine 84 lines the acetyl-CoA pocket. The active-site Proton donor/acceptor is histidine 114. Acetyl-CoA-binding positions include glycine 141, alanine 159, 164 to 165 (IR), lysine 179, and arginine 182.

Belongs to the transferase hexapeptide repeat family. Homodimer.

The chain is Putative acetyltransferase YJL218W from Saccharomyces cerevisiae (strain ATCC 204508 / S288c) (Baker's yeast).